Consider the following 215-residue polypeptide: Imidazole glycerol phosphate synthase subunit HisH (215 aa).

One can recognise a Glutamine amidotransferase type-1 domain in the interval 8–215 (KVVVFDYGFG…QLLNNWIGTL (208 aa)). Catalysis depends on Cys86, which acts as the Nucleophile. Catalysis depends on residues His196 and Glu198.

As to quaternary structure, heterodimer of HisH and HisF.

Its subcellular location is the cytoplasm. The catalysed reaction is 5-[(5-phospho-1-deoxy-D-ribulos-1-ylimino)methylamino]-1-(5-phospho-beta-D-ribosyl)imidazole-4-carboxamide + L-glutamine = D-erythro-1-(imidazol-4-yl)glycerol 3-phosphate + 5-amino-1-(5-phospho-beta-D-ribosyl)imidazole-4-carboxamide + L-glutamate + H(+). The enzyme catalyses L-glutamine + H2O = L-glutamate + NH4(+). It participates in amino-acid biosynthesis; L-histidine biosynthesis; L-histidine from 5-phospho-alpha-D-ribose 1-diphosphate: step 5/9. Its function is as follows. IGPS catalyzes the conversion of PRFAR and glutamine to IGP, AICAR and glutamate. The HisH subunit catalyzes the hydrolysis of glutamine to glutamate and ammonia as part of the synthesis of IGP and AICAR. The resulting ammonia molecule is channeled to the active site of HisF. This chain is Imidazole glycerol phosphate synthase subunit HisH, found in Streptomyces avermitilis (strain ATCC 31267 / DSM 46492 / JCM 5070 / NBRC 14893 / NCIMB 12804 / NRRL 8165 / MA-4680).